A 512-amino-acid chain; its full sequence is Glutathione-binding protein GsiB (512 aa).

The first 26 residues, 1-26, serve as a signal peptide directing secretion; sequence MARAVHRSGLVALGIATALMASCAFA.

The protein belongs to the bacterial solute-binding protein 5 family. As to quaternary structure, the complex is composed of two ATP-binding proteins (GsiA), two transmembrane proteins (GsiC and GsiD) and a solute-binding protein (GsiB).

It localises to the periplasm. Part of the ABC transporter complex GsiABCD involved in glutathione import. Binds glutathione. This is Glutathione-binding protein GsiB from Escherichia coli O6:K15:H31 (strain 536 / UPEC).